Reading from the N-terminus, the 192-residue chain is Peptidyl-tRNA hydrolase (192 aa).

Tyrosine 18 provides a ligand contact to tRNA. Histidine 23 serves as the catalytic Proton acceptor. 3 residues coordinate tRNA: phenylalanine 69, asparagine 71, and asparagine 117.

The protein belongs to the PTH family. As to quaternary structure, monomer.

The protein localises to the cytoplasm. It catalyses the reaction an N-acyl-L-alpha-aminoacyl-tRNA + H2O = an N-acyl-L-amino acid + a tRNA + H(+). In terms of biological role, hydrolyzes ribosome-free peptidyl-tRNAs (with 1 or more amino acids incorporated), which drop off the ribosome during protein synthesis, or as a result of ribosome stalling. Functionally, catalyzes the release of premature peptidyl moieties from peptidyl-tRNA molecules trapped in stalled 50S ribosomal subunits, and thus maintains levels of free tRNAs and 50S ribosomes. The chain is Peptidyl-tRNA hydrolase from Neisseria meningitidis serogroup A / serotype 4A (strain DSM 15465 / Z2491).